Consider the following 103-residue polypeptide: Large ribosomal subunit protein bL21 (103 aa).

It belongs to the bacterial ribosomal protein bL21 family. Part of the 50S ribosomal subunit. Contacts protein L20.

In terms of biological role, this protein binds to 23S rRNA in the presence of protein L20. This is Large ribosomal subunit protein bL21 from Ruthia magnifica subsp. Calyptogena magnifica.